A 115-amino-acid polypeptide reads, in one-letter code: Putative ethidium bromide resistance protein (115 aa).

The next 4 helical transmembrane spans lie at 4 to 21, 30 to 47, 58 to 79, and 85 to 104; these read WLFL…TSAL, LAPS…FYFL, VAYA…WLLH, and AWGF…ARSP.

The protein belongs to the drug/metabolite transporter (DMT) superfamily. Small multidrug resistance (SMR) (TC 2.A.7.1) family.

Its subcellular location is the cell membrane. Functionally, one of the determinants for resistance to ethidium bromide and quaternary ammonium compounds. This Escherichia coli protein is Putative ethidium bromide resistance protein (ebr).